Consider the following 158-residue polypeptide: MPHTGSQHTLQATPKTAQHTGAQKAPEQAIALKKEQQLKNQEGATSHRKAHTEGCHTQKTRMSADKAGLRHRQGSGEVRARTASTRVEGECSSDGVVMMFCMPARGEEEKASGEARGEDVGSSRESRQGTAHKSTCMHTEAASLQKAGEIGKVEDAKT.

A compositionally biased stretch (polar residues) spans 1–21; the sequence is MPHTGSQHTLQATPKTAQHTG. 2 disordered regions span residues 1-89 and 107-158; these read MPHT…RVEG and EEEK…DAKT. Basic and acidic residues-rich tracts occupy residues 51–68 and 107–127; these read HTEG…DKAG and EEEK…RESR. The segment covering 128–137 has biased composition (polar residues); that stretch reads QGTAHKSTCM. The segment covering 149-158 has biased composition (basic and acidic residues); that stretch reads EIGKVEDAKT.

This is an uncharacterized protein from Encephalitozoon cuniculi (strain GB-M1) (Microsporidian parasite).